The primary structure comprises 103 residues: Small ribosomal subunit protein uS10 (103 aa).

Belongs to the universal ribosomal protein uS10 family. In terms of assembly, part of the 30S ribosomal subunit.

Involved in the binding of tRNA to the ribosomes. The chain is Small ribosomal subunit protein uS10 from Pseudomonas savastanoi pv. phaseolicola (strain 1448A / Race 6) (Pseudomonas syringae pv. phaseolicola (strain 1448A / Race 6)).